The sequence spans 240 residues: Type II restriction enzyme DdeI (240 aa).

The enzyme catalyses Endonucleolytic cleavage of DNA to give specific double-stranded fragments with terminal 5'-phosphates.. In terms of biological role, a P subtype restriction enzyme that recognizes the double-stranded sequence 5'-CTNAG-3' and cleaves after C-1. The protein is Type II restriction enzyme DdeI (ddeIR) of Desulfomicrobium norvegicum (strain DSM 1741 / NCIMB 8310) (Desulfovibrio baculatus (strain Norway 4)).